The primary structure comprises 297 residues: NAD kinase (297 aa).

Asp-74 acts as the Proton acceptor in catalysis. NAD(+) is bound by residues 74–75 (DG), Arg-79, 148–149 (NE), Arg-176, Asp-178, 189–194 (TAYALS), and Gln-248.

This sequence belongs to the NAD kinase family. It depends on a divalent metal cation as a cofactor.

Its subcellular location is the cytoplasm. The catalysed reaction is NAD(+) + ATP = ADP + NADP(+) + H(+). In terms of biological role, involved in the regulation of the intracellular balance of NAD and NADP, and is a key enzyme in the biosynthesis of NADP. Catalyzes specifically the phosphorylation on 2'-hydroxyl of the adenosine moiety of NAD to yield NADP. The protein is NAD kinase of Blochmanniella pennsylvanica (strain BPEN).